The following is a 118-amino-acid chain: Large ribosomal subunit protein bL20c (118 aa).

It belongs to the bacterial ribosomal protein bL20 family.

The protein resides in the plastid. It localises to the chloroplast. In terms of biological role, binds directly to 23S ribosomal RNA and is necessary for the in vitro assembly process of the 50S ribosomal subunit. It is not involved in the protein synthesizing functions of that subunit. This chain is Large ribosomal subunit protein bL20c, found in Gracilaria tenuistipitata var. liui (Red alga).